Consider the following 326-residue polypeptide: Target of rapamycin complex subunit lst8 (326 aa).

WD repeat units follow at residues 1–37 (MNVN…CTRT), 40–80 (HQDS…PVIN), 83–122 (GVSK…LQCQ), 126–165 (QVNA…NEQL), 168–207 (EPDV…GDEV), 218–257 (AHKR…LMTE), and 268–309 (TSRG…REYS).

It belongs to the WD repeat LST8 family. Part of the mechanistic target of rapamycin complex 1 (mTORC1) which contains MTOR, MLST8 and RPTOR. Component of the mechanistic target of rapamycin complex 2 (mTORC2), consisting in two heterotretramers composed of MTOR, MLST8, RICTOR and MAPKAP1/SIN1.

The protein localises to the lysosome membrane. The protein resides in the cytoplasm. Functionally, subunit of both mTORC1 and mTORC2, which regulates cell growth and survival in response to nutrient and hormonal signals. mTORC1 is activated in response to growth factors or amino acids. In response to nutrients, mTORC1 is recruited to the lysosome membrane and promotes protein, lipid and nucleotide synthesis by phosphorylating several substrates, such as ribosomal protein S6 kinase (RPS6KB1 and RPS6KB2) and EIF4EBP1 (4E-BP1). In the same time, it inhibits catabolic pathways by phosphorylating the autophagy initiation components ULK1 and ATG13, as well as transcription factor TFEB, a master regulators of lysosomal biogenesis and autophagy. The mTORC1 complex is inhibited in response to starvation and amino acid depletion. Within mTORC1, MLST8 interacts directly with MTOR and enhances its kinase activity. In nutrient-poor conditions, stabilizes the MTOR-RPTOR interaction and favors RPTOR-mediated inhibition of MTOR activity. As part of the mTORC2 complex, transduces signals from growth factors to pathways involved in proliferation, cytoskeletal organization, lipogenesis and anabolic output. mTORC2 is also activated by growth factors, but seems to be nutrient-insensitive. In response to growth factors, mTORC2 phosphorylates and activates AGC protein kinase family members, including AKT (AKT1, AKT2 and AKT3), PKC (PRKCA, PRKCB and PRKCE) and SGK1. mTORC2 functions upstream of Rho GTPases to regulate the actin cytoskeleton, probably by activating one or more Rho-type guanine nucleotide exchange factors. mTORC2 promotes the serum-induced formation of stress-fibers or F-actin. Within mTORC2, MLST8 acts as a bridge between MAPKAP1/SIN1 and MTOR. The polypeptide is Target of rapamycin complex subunit lst8 (mlst8) (Danio rerio (Zebrafish)).